We begin with the raw amino-acid sequence, 253 residues long: Tetraspanin-3 (253 aa).

At 1 to 11 (MGQCGITSSKT) the chain is on the cytoplasmic side. A helical membrane pass occupies residues 12–32 (VLVFLNLIFWGAAGILCYVGA). The Extracellular portion of the chain corresponds to 33-50 (YVFITYDDYDHFFEDVYT). Residues 51-71 (LIPAVVIIAVGALLFIIGLIG) traverse the membrane as a helical segment. The Cytoplasmic segment spans residues 72-85 (CCATIRESRCGLAT). Residues 86–106 (FVIILLLVFVTEVVVVVLGYV) traverse the membrane as a helical segment. Residues 107-212 (YRAKVENEVD…KKLQEIMMHV (106 aa)) are Extracellular-facing. 4 N-linked (GlcNAc...) asparagine glycosylation sites follow: asparagine 127, asparagine 152, asparagine 167, and asparagine 183. A helical membrane pass occupies residues 213 to 233 (IWAALAFAAIQLLGMLCACIV). Residues 234–253 (LCRRSRDPAYELLITGGAYA) are Cytoplasmic-facing.

Belongs to the tetraspanin (TM4SF) family. In terms of assembly, interacts with claudin-11/CLDN11 and integrins.

It is found in the membrane. Its function is as follows. Regulates the proliferation and migration of oligodendrocytes, a process essential for normal myelination and repair. This chain is Tetraspanin-3 (TSPAN3), found in Bos taurus (Bovine).